The chain runs to 172 residues: Translation initiation factor IF-3 (172 aa).

Belongs to the IF-3 family. Monomer.

It localises to the cytoplasm. Functionally, IF-3 binds to the 30S ribosomal subunit and shifts the equilibrium between 70S ribosomes and their 50S and 30S subunits in favor of the free subunits, thus enhancing the availability of 30S subunits on which protein synthesis initiation begins. The chain is Translation initiation factor IF-3 from Bartonella henselae (strain ATCC 49882 / DSM 28221 / CCUG 30454 / Houston 1) (Rochalimaea henselae).